Here is a 365-residue protein sequence, read N- to C-terminus: Serine protease 40 (365 aa).

The signal sequence occupies residues 1–34 (MCGIRAKKSGLGGYGAGLLAALLGVSFLSQHAQT). An N-linked (GlcNAc...) asparagine glycan is attached at asparagine 44. The region spanning 69-313 (IYGGQIAGAE…FDKWIKDNKK (245 aa)) is the Peptidase S1 domain. A disulfide bridge links cysteine 94 with cysteine 110. Residues histidine 109 and aspartate 159 each act as charge relay system in the active site. 3 disulfides stabilise this stretch: cysteine 193-cysteine 270, cysteine 226-cysteine 249, and cysteine 260-cysteine 288. The Charge relay system role is filled by serine 264. The disordered stretch occupies residues 312–343 (KKSSSNSKPGESPHHPGSPENENPEGDNKNQG).

It belongs to the peptidase S1 family. As to expression, expressed in testis. More specifically, abundantly expressed in the haploid round spermatid.

It localises to the cytoplasmic vesicle. It is found in the secretory vesicle. Its subcellular location is the acrosome. The protein resides in the secreted. May play an important role in the sperm/egg interaction; released during the acrosome reaction. The chain is Serine protease 40 (Prss40) from Mus musculus (Mouse).